The sequence spans 156 residues: ATP synthase subunit b (156 aa).

A helical transmembrane segment spans residues 7-29 (LFAQMVVFLVLAWFTMKFVWPPL).

This sequence belongs to the ATPase B chain family. In terms of assembly, F-type ATPases have 2 components, F(1) - the catalytic core - and F(0) - the membrane proton channel. F(1) has five subunits: alpha(3), beta(3), gamma(1), delta(1), epsilon(1). F(0) has three main subunits: a(1), b(2) and c(10-14). The alpha and beta chains form an alternating ring which encloses part of the gamma chain. F(1) is attached to F(0) by a central stalk formed by the gamma and epsilon chains, while a peripheral stalk is formed by the delta and b chains.

The protein resides in the cell inner membrane. In terms of biological role, f(1)F(0) ATP synthase produces ATP from ADP in the presence of a proton or sodium gradient. F-type ATPases consist of two structural domains, F(1) containing the extramembraneous catalytic core and F(0) containing the membrane proton channel, linked together by a central stalk and a peripheral stalk. During catalysis, ATP synthesis in the catalytic domain of F(1) is coupled via a rotary mechanism of the central stalk subunits to proton translocation. Component of the F(0) channel, it forms part of the peripheral stalk, linking F(1) to F(0). This is ATP synthase subunit b from Burkholderia pseudomallei (strain 668).